We begin with the raw amino-acid sequence, 107 residues long: Iron-binding protein IscA (107 aa).

Fe cation-binding residues include cysteine 35, cysteine 99, and cysteine 101.

Belongs to the HesB/IscA family. In terms of assembly, homodimer; may form tetramers and higher multimers. Fe cation serves as cofactor.

Functionally, is able to transfer iron-sulfur clusters to apo-ferredoxin. Multiple cycles of [2Fe2S] cluster formation and transfer are observed, suggesting that IscA acts catalytically. Recruits intracellular free iron so as to provide iron for the assembly of transient iron-sulfur cluster in IscU in the presence of IscS, L-cysteine and the thioredoxin reductase system TrxA/TrxB. The chain is Iron-binding protein IscA from Yersinia enterocolitica serotype O:8 / biotype 1B (strain NCTC 13174 / 8081).